Reading from the N-terminus, the 195-residue chain is FMN-dependent NADH:quinone oxidoreductase (195 aa).

FMN contacts are provided by residues serine 10, serine 16 to serine 18, and methionine 88 to phenylalanine 91.

This sequence belongs to the azoreductase type 1 family. In terms of assembly, homodimer. The cofactor is FMN.

The enzyme catalyses 2 a quinone + NADH + H(+) = 2 a 1,4-benzosemiquinone + NAD(+). It catalyses the reaction N,N-dimethyl-1,4-phenylenediamine + anthranilate + 2 NAD(+) = 2-(4-dimethylaminophenyl)diazenylbenzoate + 2 NADH + 2 H(+). Functionally, quinone reductase that provides resistance to thiol-specific stress caused by electrophilic quinones. Also exhibits azoreductase activity. Catalyzes the reductive cleavage of the azo bond in aromatic azo compounds to the corresponding amines. The chain is FMN-dependent NADH:quinone oxidoreductase from Francisella philomiragia subsp. philomiragia (strain ATCC 25017 / CCUG 19701 / FSC 153 / O#319-036).